The following is a 110-amino-acid chain: UPF0060 membrane protein MMAR_2961 (110 aa).

The next 4 helical transmembrane spans lie at 6 to 26 (ILLF…VWQG), 32 to 52 (GLAW…VATL), 61 to 81 (ILAA…MAFD), and 90 to 110 (IVGA…PRAH).

This sequence belongs to the UPF0060 family.

Its subcellular location is the cell membrane. In Mycobacterium marinum (strain ATCC BAA-535 / M), this protein is UPF0060 membrane protein MMAR_2961.